We begin with the raw amino-acid sequence, 103 residues long: Large ribosomal subunit protein bL21 (103 aa).

This sequence belongs to the bacterial ribosomal protein bL21 family. As to quaternary structure, part of the 50S ribosomal subunit. Contacts protein L20.

This protein binds to 23S rRNA in the presence of protein L20. The chain is Large ribosomal subunit protein bL21 from Haemophilus influenzae (strain PittEE).